Consider the following 473-residue polypeptide: Cysteine--tRNA ligase (473 aa).

Cys-29 provides a ligand contact to Zn(2+). The 'HIGH' region motif lies at 31-41; the sequence is PTVYDRAHLGN. Zn(2+)-binding residues include Cys-225, His-250, and Glu-254. The 'KMSKS' region signature appears at 281-285; it reads KMSKS. Lys-284 is a binding site for ATP.

Belongs to the class-I aminoacyl-tRNA synthetase family. In terms of assembly, monomer. Requires Zn(2+) as cofactor.

It localises to the cytoplasm. It carries out the reaction tRNA(Cys) + L-cysteine + ATP = L-cysteinyl-tRNA(Cys) + AMP + diphosphate. This Roseobacter denitrificans (strain ATCC 33942 / OCh 114) (Erythrobacter sp. (strain OCh 114)) protein is Cysteine--tRNA ligase.